We begin with the raw amino-acid sequence, 374 residues long: S-adenosylmethionine:tRNA ribosyltransferase-isomerase (374 aa).

The protein belongs to the QueA family. In terms of assembly, monomer.

The protein localises to the cytoplasm. The catalysed reaction is 7-aminomethyl-7-carbaguanosine(34) in tRNA + S-adenosyl-L-methionine = epoxyqueuosine(34) in tRNA + adenine + L-methionine + 2 H(+). The protein operates within tRNA modification; tRNA-queuosine biosynthesis. Functionally, transfers and isomerizes the ribose moiety from AdoMet to the 7-aminomethyl group of 7-deazaguanine (preQ1-tRNA) to give epoxyqueuosine (oQ-tRNA). The sequence is that of S-adenosylmethionine:tRNA ribosyltransferase-isomerase from Sorangium cellulosum (strain So ce56) (Polyangium cellulosum (strain So ce56)).